An 85-amino-acid chain; its full sequence is Large ribosomal subunit protein bL27 (85 aa).

Residues 1–22 form a disordered region; that stretch reads MAHKKAGGSTKNGRDSESKRLG.

It belongs to the bacterial ribosomal protein bL27 family.

This chain is Large ribosomal subunit protein bL27, found in Alteromonas mediterranea (strain DSM 17117 / CIP 110805 / LMG 28347 / Deep ecotype).